The chain runs to 480 residues: MSAEVIHQVEEALDTDEKEMLLFLCRDVAIDVVPPNVRDLLDILRERGKLSVGDLAELLYRVRRFDLLKRILKMDRKAVETHLLRNPHLVSDYRVLMAEIGEDLDKSDVSSLIFLMKDYMGRGKISKEKSFLDLVVELEKLNLVAPDQLDLLEKCLKNIHRIDLKTKIQKYKQSVQGAGTSYRNVLQAAIQKSLKDPSNNFRLHNGRSKEQRLKEQLGAQQEPVKKSIQESEAFLPQSIPEERYKMKSKPLGICLIIDCIGNETELLRDTFTSLGYEVQKFLHLSMHGISQILGQFACMPEHRDYDSFVCVLVSRGGSQSVYGVDQTHSGLPLHHIRRMFMGDSCPYLAGKPKMFFIQNYVVSEGQLEDSSLLEVDGPAMKNVEFKAQKRGLCTVHREADFFWSLCTADMSLLEQSHSSPSLYLQCLSQKLRQERKRPLLDLHIELNGYMYDWNSRVSAKEKYYVWLQHTLRKKLILSYT.

DED domains are found at residues 1 to 73 (MSAE…RILK) and 92 to 170 (DYRV…KIQK). Positions 1 to 195 (MSAEVIHQVE…LQAAIQKSLK (195 aa)) are interaction with CASP8. The interval 1–227 (MSAEVIHQVE…GAQQEPVKKS (227 aa)) is interaction with FADD. Positions 1 to 305 (MSAEVIHQVE…FACMPEHRDY (305 aa)) are interaction with CASP8 propeptide. A not proteolytically processed and involved in apoptosis inhibition region spans residues 1–435 (MSAEVIHQVE…CLSQKLRQER (435 aa)). Positions 192 to 435 (KSLKDPSNNF…CLSQKLRQER (244 aa)) are interaction with CASP3. The segment at 192-480 (KSLKDPSNNF…LRKKLILSYT (289 aa)) is interaction with TRAF1 and TRAF2. The segment at 217–480 (LGAQQEPVKK…LRKKLILSYT (264 aa)) is interaction with CASP8 subunits p18 and p10. Positions 263 to 358 (ETELLRDTFT…AGKPKMFFIQ (96 aa)) are caspase. The interval 370–480 (SSLLEVDGPA…LRKKLILSYT (111 aa)) is interaction with CASP8.

Belongs to the peptidase C14A family. As to quaternary structure, TNFRSF6 stimulation triggers recruitment to the death-inducing signaling complex (DISC) formed by TNFRSF6, FADD and CASP8. A proteolytic fragment (p43) stays associated with the DISC. Also interacts with FADD, CASP8, CASP3, TRAF1, TRAF2 and Bcl-X(L) (in vitro). Interacts with RIPK1. (Microbial infection) Interacts with HBV protein X. Proteolytically processed by CASP8 generating subunit p43 and p12. In terms of tissue distribution, widely expressed. Higher expression in skeletal muscle, pancreas, heart, kidney, placenta, and peripheral blood leukocytes. Also detected in diverse cell lines. Isoform 8 is predominantly expressed in testis and skeletal muscle.

Functionally, apoptosis regulator protein which may function as a crucial link between cell survival and cell death pathways in mammalian cells. Acts as an inhibitor of TNFRSF6 mediated apoptosis. A proteolytic fragment (p43) is likely retained in the death-inducing signaling complex (DISC) thereby blocking further recruitment and processing of caspase-8 at the complex. Full length and shorter isoforms have been shown either to induce apoptosis or to reduce TNFRSF-triggered apoptosis. Lacks enzymatic (caspase) activity. The protein is CASP8 and FADD-like apoptosis regulator (CFLAR) of Homo sapiens (Human).